The chain runs to 96 residues: Prokineticin Bm8-a (96 aa).

Positions 1–19 (MKCFAQIVVLLLVIAFSHG) are cleaved as a signal peptide. Intrachain disulfides connect Cys26–Cys38, Cys32–Cys50, Cys37–Cys78, Cys60–Cys86, and Cys80–Cys95.

It belongs to the AVIT (prokineticin) family. Expressed by the skin glands.

Its subcellular location is the secreted. Potent agonist for both PKR1/PROKR1 and PKR2/PROKR2, and inducer of a potent and long-lasting hyperalgesia. Also potentiates capsaicin-induced TRPV1 current, when tested on DRG neurons. At subnanomolar concentrations, this protein both induces potent chemotaxis of macrophages and stimulates LPS-induced production of the pro-inflammatory cytokines IL-1 and IL-12. In vivo, potently stimulates the contraction of the guinea-pig gastrointestinal (GI) smooth muscle (nanomolar concentration). The polypeptide is Prokineticin Bm8-a (Bombina maxima (Giant fire-bellied toad)).